Here is a 465-residue protein sequence, read N- to C-terminus: E3 ubiquitin-protein ligase parkin (465 aa).

In terms of domain architecture, Ubiquitin-like spans 1-76; that stretch reads MIVFVRFNSS…VHIVQRPWRK (76 aa). Phosphoserine; by PINK1 is present on Ser-65. The tract at residues 77 to 99 is disordered; sequence GQEMNATGGDDPRNAAGGCEREP. Positions 77 to 237 are necessary for PINK1-dependent localization to mitochondria; it reads GQEMNATGGD…LIATNSRNIT (161 aa). An RING-type 0; atypical zinc finger spans residues 141-225; that stretch reads SIYNSFYVYC…PTSDKETSVA (85 aa). Thr-175 carries the phosphothreonine; by PINK1 modification. The SYT11 binding 1 stretch occupies residues 204 to 238; it reads TSAEFFFKCGAHPTSDKETSVALHLIATNSRNITC. Thr-217 is modified (phosphothreonine). The interval 234-465 is TRIAD supradomain; it reads RNITCITCTD…VCMGDHWFDV (232 aa). Residues Cys-238, Cys-241, Cys-253, His-257, Cys-260, Cys-263, Cys-289, Cys-293, Cys-332, and Cys-337 each contribute to the Zn(2+) site. An RING-type 1 zinc finger spans residues 238–293; it reads CITCTDVRSPVLVFQCNSRHVICLDCFHLYCVTRLNDRQFVHDPQLGYSLPCVAGC. An SYT11 binding 2 region spans residues 257–293; that stretch reads HVICLDCFHLYCVTRLNDRQFVHDPQLGYSLPCVAGC. The IBR-type zinc-finger motif lies at 313–377; it reads NRYQQYGAEE…CKEAYHEGEC (65 aa). Lys-349 participates in a covalent cross-link: Glycyl lysine isopeptide (Lys-Gly) (interchain with G-Cter in ISG15). Zn(2+) contacts are provided by Cys-352, Cys-360, Cys-365, and Cys-368. A Glycyl lysine isopeptide (Lys-Gly) (interchain with G-Cter in ISG15) cross-link involves residue Lys-369. The Zn(2+) site is built by His-373 and Cys-377. Residues 378-410 form an REP region; sequence SAVFEASGTTTQAYRVDERAAEQARWEAASKET. Positions 418 and 421 each coordinate Zn(2+). The RING-type 2; atypical zinc-finger motif lies at 418-449; sequence CPRCHVPVEKNGGCMHMKCPQPQCRLEWCWNC. Cys-431 is a catalytic residue. Cys-436, Cys-441, Cys-446, Cys-449, Cys-457, and His-461 together coordinate Zn(2+).

The protein belongs to the RBR family. Parkin subfamily. As to quaternary structure, forms an E3 ubiquitin ligase complex with UBE2L3 or UBE2L6. Mediates 'Lys-63'-linked polyubiquitination by associating with UBE2V1. Part of a SCF-like complex, consisting of PRKN, CUL1 and FBXW7. Interacts with SNCAIP. Binds to the C2A and C2B domains of SYT11. Interacts and regulates the turnover of SEPTIN5. Part of a complex, including STUB1, HSP70 and GPR37. The amount of STUB1 in the complex increases during ER stress. STUB1 promotes the dissociation of HSP70 from PRKN and GPR37, thus facilitating PRKN-mediated GPR37 ubiquitination. HSP70 transiently associates with unfolded GPR37 and inhibits the E3 activity of PRKN, whereas, STUB1 enhances the E3 activity of PRKN through promotion of dissociation of HSP70 from PRKN-GPR37 complexes. Interacts with PSMD4 and PACRG. Interacts with LRRK2. Interacts with RANBP2. Interacts with SUMO1 but not SUMO2, which promotes nuclear localization and autoubiquitination. Interacts (via first RING-type domain) with AIMP2 (via N-terminus). Interacts with PSMA7 and RNF41. Interacts with PINK1. Forms a complex with PINK1 and PARK7. Interacts with CHPF, the interaction with isoform 2 may facilitate PRKN transport into the mitochondria. Interacts with MFN2 (phosphorylated), promotes PRKN localization in dysfunctional depolarized mitochondria. Interacts with FBXO7; this promotes translocation to dysfunctional depolarized mitochondria. Interacts with ZNF746. Interacts with heat shock protein 70 family members, including HSPA1L, HSPA1A and HSPA8; interaction HSPA1L promotes translocation to damaged mitochondria. Interacts with BAG4 and, to a lesser extent, BAG5; interaction with BAG4 inhibits translocation to damaged mitochondria. Forms a complex with PRKN and PARK7. Interacts with AMBRA1. ISGylated. Conjugated to ubiquitin-like protein ISG15 upon IFN-beta stimulation. ISGylation positively regulates its E3 ligase activity. In terms of processing, auto-ubiquitinates in an E2-dependent manner leading to its own degradation. Also polyubiquitinated by RNF41 for proteasomal degradation. Post-translationally, S-nitrosylated. The inhibition of PRKN ubiquitin E3 ligase activity by S-nitrosylation could contribute to the degenerative process in PD by impairing the ubiquitination of PRKN substrates. Phosphorylated. Activation requires phosphorylation at Ser-65 by PINK1 and binding to PINK1 phosphorylated ubiquitin. Phosphorylation at Thr-175 by PINK1 and at Thr-217 is important for mitochondrial localization. As to expression, highly expressed in the brain including the substantia nigra. Expressed in heart, testis and skeletal muscle. Expression is down-regulated or absent in tumor biopsies, and absent in the brain of PARK2 patients. Overexpression protects dopamine neurons from kainate-mediated apoptosis. Found in serum (at protein level).

It is found in the cytoplasm. The protein localises to the cytosol. The protein resides in the nucleus. Its subcellular location is the endoplasmic reticulum. It localises to the mitochondrion. It is found in the mitochondrion outer membrane. The protein localises to the cell projection. The protein resides in the neuron projection. Its subcellular location is the postsynaptic density. It localises to the presynapse. The catalysed reaction is [E2 ubiquitin-conjugating enzyme]-S-ubiquitinyl-L-cysteine + [acceptor protein]-L-lysine = [E2 ubiquitin-conjugating enzyme]-L-cysteine + [acceptor protein]-N(6)-ubiquitinyl-L-lysine.. Its pathway is protein modification; protein ubiquitination. In the autoinhibited state the side chain of Phe-463 inserts into a hydrophobic groove in RING-0, occluding the ubiquitin acceptor site Cys-431, whereas the REP repressor element binds RING-1 and blocks its E2-binding site. Activation of PRKN requires 2 steps: (1) phosphorylation at Ser-65 by PINK1 and (2) binding to phosphorylated ubiquitin, leading to unlock repression of the catalytic Cys-431 by the RING-0 region via an allosteric mechanism and converting PRKN to its fully-active form. According to another report, phosphorylation at Ser-65 by PINK1 is not essential for activation and only binding to phosphorylated ubiquitin is essential to unlock repression. In addition, ISG15 conjugation positively regulates its ubiquitin E3 ligase activity by suppressing the intramolecular interaction that maintains its autoinhibited conformation. In terms of biological role, functions within a multiprotein E3 ubiquitin ligase complex, catalyzing the covalent attachment of ubiquitin moieties onto substrate proteins. Substrates include SYT11 and VDAC1. Other substrates are BCL2, CCNE1, GPR37, RHOT1/MIRO1, MFN1, MFN2, STUB1, SNCAIP, SEPTIN5, TOMM20, USP30, ZNF746, MIRO1 and AIMP2. Mediates monoubiquitination as well as 'Lys-6', 'Lys-11', 'Lys-48'-linked and 'Lys-63'-linked polyubiquitination of substrates depending on the context. Participates in the removal and/or detoxification of abnormally folded or damaged protein by mediating 'Lys-63'-linked polyubiquitination of misfolded proteins such as PARK7: 'Lys-63'-linked polyubiquitinated misfolded proteins are then recognized by HDAC6, leading to their recruitment to aggresomes, followed by degradation. Mediates 'Lys-63'-linked polyubiquitination of a 22 kDa O-linked glycosylated isoform of SNCAIP, possibly playing a role in Lewy-body formation. Mediates monoubiquitination of BCL2, thereby acting as a positive regulator of autophagy. Protects against mitochondrial dysfunction during cellular stress, by acting downstream of PINK1 to coordinate mitochondrial quality control mechanisms that remove and replace dysfunctional mitochondrial components. Depending on the severity of mitochondrial damage and/or dysfunction, activity ranges from preventing apoptosis and stimulating mitochondrial biogenesis to regulating mitochondrial dynamics and eliminating severely damaged mitochondria via mitophagy. Activation and recruitment onto the outer membrane of damaged/dysfunctional mitochondria (OMM) requires PINK1-mediated phosphorylation of both PRKN and ubiquitin. After mitochondrial damage, functions with PINK1 to mediate the decision between mitophagy or preventing apoptosis by inducing either the poly- or monoubiquitination of VDAC1, respectively; polyubiquitination of VDAC1 promotes mitophagy, while monoubiquitination of VDAC1 decreases mitochondrial calcium influx which ultimately inhibits apoptosis. When cellular stress results in irreversible mitochondrial damage, promotes the autophagic degradation of dysfunctional depolarized mitochondria (mitophagy) by promoting the ubiquitination of mitochondrial proteins such as TOMM20, RHOT1/MIRO1, MFN1 and USP30. Preferentially assembles 'Lys-6'-, 'Lys-11'- and 'Lys-63'-linked polyubiquitin chains, leading to mitophagy. The PINK1-PRKN pathway also promotes fission of damaged mitochondria by PINK1-mediated phosphorylation which promotes the PRKN-dependent degradation of mitochondrial proteins involved in fission such as MFN2. This prevents the refusion of unhealthy mitochondria with the mitochondrial network or initiates mitochondrial fragmentation facilitating their later engulfment by autophagosomes. Regulates motility of damaged mitochondria via the ubiquitination and subsequent degradation of MIRO1 and MIRO2; in motor neurons, this likely inhibits mitochondrial intracellular anterograde transport along the axons which probably increases the chance of the mitochondria undergoing mitophagy in the soma. Involved in mitochondrial biogenesis via the 'Lys-48'-linked polyubiquitination of transcriptional repressor ZNF746/PARIS which leads to its subsequent proteasomal degradation and allows activation of the transcription factor PPARGC1A. Limits the production of reactive oxygen species (ROS). Regulates cyclin-E during neuronal apoptosis. In collaboration with CHPF isoform 2, may enhance cell viability and protect cells from oxidative stress. Independently of its ubiquitin ligase activity, protects from apoptosis by the transcriptional repression of p53/TP53. May protect neurons against alpha synuclein toxicity, proteasomal dysfunction, GPR37 accumulation, and kainate-induced excitotoxicity. May play a role in controlling neurotransmitter trafficking at the presynaptic terminal and in calcium-dependent exocytosis. May represent a tumor suppressor gene. This Homo sapiens (Human) protein is E3 ubiquitin-protein ligase parkin.